The chain runs to 398 residues: Acetate kinase 1 (398 aa).

A Mg(2+)-binding site is contributed by Asn-9. Residue Lys-16 participates in ATP binding. Arg-89 provides a ligand contact to substrate. Asp-146 (proton donor/acceptor) is an active-site residue. Residues 206–210, 281–283, and 329–333 each bind ATP; these read HLGNG, DCR, and GIGEN. Glu-384 lines the Mg(2+) pocket.

It belongs to the acetokinase family. Homodimer. Mg(2+) serves as cofactor. The cofactor is Mn(2+).

It localises to the cytoplasm. The enzyme catalyses acetate + ATP = acetyl phosphate + ADP. The protein operates within metabolic intermediate biosynthesis; acetyl-CoA biosynthesis; acetyl-CoA from acetate: step 1/2. Functionally, catalyzes the formation of acetyl phosphate from acetate and ATP. Can also catalyze the reverse reaction. The protein is Acetate kinase 1 of Vibrio cholerae serotype O1 (strain ATCC 39315 / El Tor Inaba N16961).